The chain runs to 177 residues: Large ribosomal subunit protein uL6 (177 aa).

This sequence belongs to the universal ribosomal protein uL6 family. In terms of assembly, part of the 50S ribosomal subunit.

Functionally, this protein binds to the 23S rRNA, and is important in its secondary structure. It is located near the subunit interface in the base of the L7/L12 stalk, and near the tRNA binding site of the peptidyltransferase center. In Brucella canis (strain ATCC 23365 / NCTC 10854 / RM-666), this protein is Large ribosomal subunit protein uL6.